Reading from the N-terminus, the 227-residue chain is Probable N-acetyltransferase family 8 member 5 (227 aa).

3 consecutive transmembrane segments (helical) span residues 29–49 (IPAA…LFVM), 53–73 (IVLV…LLLL), and 201–221 (ISII…SFPS). In terms of domain architecture, N-acetyltransferase spans 69–213 (FLLLLLRLLA…IKWLITFSII (145 aa)).

Belongs to the camello family.

It is found in the membrane. Functionally, may play a role in regulation of gastrulation. This Mus musculus (Mouse) protein is Probable N-acetyltransferase family 8 member 5.